A 271-amino-acid polypeptide reads, in one-letter code: Bifunctional protein FolD (271 aa).

NADP(+)-binding positions include 154–156, Thr-181, and Ile-222; that span reads GRS.

This sequence belongs to the tetrahydrofolate dehydrogenase/cyclohydrolase family. In terms of assembly, homodimer.

The catalysed reaction is (6R)-5,10-methylene-5,6,7,8-tetrahydrofolate + NADP(+) = (6R)-5,10-methenyltetrahydrofolate + NADPH. It carries out the reaction (6R)-5,10-methenyltetrahydrofolate + H2O = (6R)-10-formyltetrahydrofolate + H(+). It functions in the pathway one-carbon metabolism; tetrahydrofolate interconversion. Catalyzes the oxidation of 5,10-methylenetetrahydrofolate to 5,10-methenyltetrahydrofolate and then the hydrolysis of 5,10-methenyltetrahydrofolate to 10-formyltetrahydrofolate. The polypeptide is Bifunctional protein FolD (Thermosipho africanus (strain TCF52B)).